Reading from the N-terminus, the 147-residue chain is Acidic phospholipase A2 S3-24 (147 aa).

Positions 1-19 (MYPAHLLVLLAVCVSLLGA) are cleaved as a signal peptide. A propeptide spanning residues 20–27 (SDMPPQPL) is cleaved from the precursor. 7 disulfide bridges follow: Cys-38–Cys-99, Cys-54–Cys-146, Cys-56–Cys-72, Cys-71–Cys-127, Cys-78–Cys-120, Cys-88–Cys-113, and Cys-106–Cys-118. The Ca(2+) site is built by Tyr-55, Gly-57, and Gly-59. His-75 is a catalytic residue. Asp-76 provides a ligand contact to Ca(2+). Asp-121 is a catalytic residue.

This sequence belongs to the phospholipase A2 family. Group I subfamily. D49 sub-subfamily. Requires Ca(2+) as cofactor. In terms of tissue distribution, expressed by the venom gland.

The protein resides in the secreted. It catalyses the reaction a 1,2-diacyl-sn-glycero-3-phosphocholine + H2O = a 1-acyl-sn-glycero-3-phosphocholine + a fatty acid + H(+). Functionally, snake venom phospholipase A2 (PLA2) that inhibits collagen-induced platelet aggregation. PLA2 catalyzes the calcium-dependent hydrolysis of the 2-acyl groups in 3-sn-phosphoglycerides. This chain is Acidic phospholipase A2 S3-24, found in Austrelaps superbus (Lowland copperhead snake).